A 151-amino-acid polypeptide reads, in one-letter code: SsrA-binding protein (151 aa).

The interval 124–151 (GKKLHDKRESEKERDWNRQKSRLLKAHG) is disordered. Residues 129–141 (DKRESEKERDWNR) are compositionally biased toward basic and acidic residues. Residues 142-151 (QKSRLLKAHG) are compositionally biased toward basic residues.

This sequence belongs to the SmpB family.

The protein localises to the cytoplasm. Required for rescue of stalled ribosomes mediated by trans-translation. Binds to transfer-messenger RNA (tmRNA), required for stable association of tmRNA with ribosomes. tmRNA and SmpB together mimic tRNA shape, replacing the anticodon stem-loop with SmpB. tmRNA is encoded by the ssrA gene; the 2 termini fold to resemble tRNA(Ala) and it encodes a 'tag peptide', a short internal open reading frame. During trans-translation Ala-aminoacylated tmRNA acts like a tRNA, entering the A-site of stalled ribosomes, displacing the stalled mRNA. The ribosome then switches to translate the ORF on the tmRNA; the nascent peptide is terminated with the 'tag peptide' encoded by the tmRNA and targeted for degradation. The ribosome is freed to recommence translation, which seems to be the essential function of trans-translation. In Rhizobium johnstonii (strain DSM 114642 / LMG 32736 / 3841) (Rhizobium leguminosarum bv. viciae), this protein is SsrA-binding protein.